A 766-amino-acid chain; its full sequence is FYVE, RhoGEF and PH domain-containing protein 4 (766 aa).

The actin filament-binding stretch occupies residues 1–150 (MEESNPAPTS…SSVTNSHDEN (150 aa)). Composition is skewed to polar residues over residues 43–65 (STMN…TPQK), 132–145 (RNET…SVTN), and 152–161 (CDSSCRTQGT). A disordered region spans residues 43–167 (STMNLNIPQT…TQGTDLGLPS (125 aa)). Residues 206-393 (KLHKIATELL…STAASHSNSA (188 aa)) form the DH domain. The region spanning 422–521 (ELIKEGQILK…WIKALQESID (100 aa)) is the PH 1 domain. The FYVE-type zinc finger occupies 559-619 (DNEVTMCMKC…VCKDCYQIMS (61 aa)). Residues Cys565, Cys568, Cys582, Cys585, Cys590, Cys593, Cys611, and Cys614 each coordinate Zn(2+). The PH 2 domain maps to 643–740 (NSEVCSFLQY…WLKIILLAVT (98 aa)). Residues Ser702 and Ser716 each carry the phosphoserine modification. Residues 745–766 (DGPSEHLDTLDNLPGPKEKSEC) are disordered.

As to quaternary structure, homooligomer. In terms of tissue distribution, detected in brain, lung, liver, skeletal muscle, kidney, testis and cultured hippocampal neurons.

The protein resides in the cytoplasm. Its subcellular location is the cytoskeleton. It localises to the cell projection. The protein localises to the filopodium. Functionally, activates CDC42, a member of the Ras-like family of Rho- and Rac proteins, by exchanging bound GDP for free GTP. Plays a role in regulating the actin cytoskeleton and cell shape. Activates MAPK8. The polypeptide is FYVE, RhoGEF and PH domain-containing protein 4 (Fgd4) (Rattus norvegicus (Rat)).